The following is a 216-amino-acid chain: Ras-related protein Rab-11A (216 aa).

Residue glycine 2 is modified to N-acetylglycine. Residues serine 20, glycine 21, valine 22, glycine 23, lysine 24, serine 25, asparagine 26, asparagine 37, leucine 38, serine 40, serine 42, and threonine 43 each contribute to the GTP site. A Mg(2+)-binding site is contributed by serine 25. The Switch 1 motif lies at 36–47 (FNLESKSTIGVE). Residues threonine 43 and aspartate 66 each coordinate Mg(2+). The Switch 2 motif lies at 67-86 (TAGQERYRAITSAYYRGAVG). GTP-binding residues include glycine 69, asparagine 124, lysine 125, aspartate 127, alanine 155, and leucine 156. Residues 183 to 208 (DRRENDMSPSNNVVPIHVPPTTENKP) are disordered. Residues cysteine 212 and cysteine 213 are each lipidated (S-geranylgeranyl cysteine). Cysteine 213 carries the post-translational modification Cysteine methyl ester. Residues 214 to 216 (QNI) constitute a propeptide, removed in mature form.

This sequence belongs to the small GTPase superfamily. Rab family. Requires Mg(2+) as cofactor.

It is found in the cell membrane. Its subcellular location is the endosome membrane. The protein resides in the recycling endosome membrane. It localises to the cleavage furrow. The protein localises to the cytoplasmic vesicle. It is found in the phagosome. Its subcellular location is the cytoplasmic vesicle membrane. The protein resides in the golgi apparatus. It localises to the trans-Golgi network. It catalyses the reaction GTP + H2O = GDP + phosphate + H(+). With respect to regulation, regulated by guanine nucleotide exchange factors (GEFs) which promote the exchange of bound GDP for free GTP. Regulated by GTPase activating proteins (GAPs) which increase the GTP hydrolysis activity. Inhibited by GDP dissociation inhibitors (GDIs) which prevent Rab-GDP dissociation. The small GTPases Rab are key regulators of intracellular membrane trafficking, from the formation of transport vesicles to their fusion with membranes. Rabs cycle between an inactive GDP-bound form and an active GTP-bound form that is able to recruit to membranes different set of downstream effectors directly responsible for vesicle formation, movement, tethering and fusion. The small Rab GTPase RAB11A regulates endocytic recycling. May also be involved in the regulation of preciliary trafficking and neosynthesized protein export. The polypeptide is Ras-related protein Rab-11A (RAB11A) (Gallus gallus (Chicken)).